The primary structure comprises 499 residues: Cytochrome P450 77A1 (499 aa).

Heme is bound at residue Cys-443.

This sequence belongs to the cytochrome P450 family. It depends on heme as a cofactor.

This Solanum melongena (Eggplant) protein is Cytochrome P450 77A1 (CYP77A1).